A 508-amino-acid polypeptide reads, in one-letter code: Maturase K (508 aa).

This sequence belongs to the intron maturase 2 family. MatK subfamily.

It localises to the plastid. The protein resides in the chloroplast. Functionally, usually encoded in the trnK tRNA gene intron. Probably assists in splicing its own and other chloroplast group II introns. The protein is Maturase K of Ranunculus trichophyllus (Whitewater crowfoot).